The following is a 248-amino-acid chain: mRNA-decapping protein OPG122 (248 aa).

The Nudix hydrolase domain maps to 45–227 (HKRVSVSAIL…IAKYALDTAK (183 aa)). A Nudix box motif is present at residues 125 to 147 (GGILKRGENVPECLSREIKEEVN). Glu132 serves as a coordination point for Mg(2+). Residue Glu141 is the Nucleophile of the active site. Glu145 lines the Mn(2+) pocket. Asp167 contacts Mg(2+).

This sequence belongs to the Nudix hydrolase family. Mg(2+) serves as cofactor. The cofactor is Mn(2+).

Its subcellular location is the host mitochondrion. Decapping enzyme that remove the protective 5'-cap from both host and viral mRNAs to commit transcripts for decay by the cellular exonuclease XRN1. Preferentially targets spliced mRNAs and since all viral genes are intronless, it preferentially targets host over viral transcripts. Acceleration of the turnover of cellular transcripts promotes the shutoff of host protein synthesis and therefore diminish the magnitude of antiviral response. The sequence is that of mRNA-decapping protein OPG122 (OPG122) from Variola virus (isolate Human/India/Ind3/1967) (VARV).